Consider the following 338-residue polypeptide: Nodulation outer protein L (338 aa).

Over residues 1–14 (MDINSTSPLNASPQ) the composition is skewed to polar residues. 4 disordered regions span residues 1 to 48 (MDIN…LPQV), 85 to 158 (TRER…DLET), 187 to 209 (SPAP…PHAR), and 230 to 259 (PQAG…SSAG). Residues 85 to 97 (TRERSPHPSEQRP) show a composition bias toward basic and acidic residues. The segment covering 126–138 (VGPSRSGPSQAGL) has biased composition (polar residues). The span at 242–258 (SGPSQARPSHAWPSSSA) shows a compositional bias: polar residues.

The protein resides in the secreted. Putative symbiotic effector that modulates nodulation in legumes. When delivered into the plant cell, modulates the activity of signal transduction pathways that culminate in activation of PR proteins. The polypeptide is Nodulation outer protein L (nopL) (Sinorhizobium fredii (strain NBRC 101917 / NGR234)).